A 503-amino-acid polypeptide reads, in one-letter code: Sodium/hydrogen exchanger 3 (503 aa).

Residues 1 to 22 (MVIGLSTMLEKTEALFASDHAS) lie on the Cytoplasmic side of the membrane. The chain crosses the membrane as a helical span at residues 23–43 (VVSMNLFVALLCACIVLGHLL). Residues 44 to 51 (EETRWMNE) are Vacuolar-facing. The N-linked (GlcNAc...) asparagine glycan is linked to asparagine 50. The chain crosses the membrane as a helical span at residues 52–72 (SITALIIGSCTGIVILLISGG). Residues 73–76 (KSSR) lie on the Cytoplasmic side of the membrane. The helical intramembrane region spans 77–97 (ILVFSEDLFFIYLLPPIIFNA). Topologically, residues 98–109 (GFQVKKKQFFRN) are cytoplasmic. A helical transmembrane segment spans residues 110–130 (FMTIMLFGAIGTLISFVIISF). The Vacuolar segment spans residues 131–138 (GAKHLFEK). Residues 139 to 159 (MNIGDLTIADYLAIGAIFSAT) form a helical membrane-spanning segment. The Cytoplasmic portion of the chain corresponds to 160 to 174 (DSVCTLQVLNQDETP). A helical membrane pass occupies residues 175-195 (LLYSLVFGEGVVNDATSVVLF). The Vacuolar portion of the chain corresponds to 196-219 (NAIQRFDLTNINSAIALEFAGNFF). Residues 220–240 (YLFILSTALGVAAGLLSAFVI) form a helical membrane-spanning segment. Residues 241–265 (KKLYIGRHSTDREVALMMLLAYLSY) lie on the Cytoplasmic side of the membrane. Residues 266 to 286 (MLAELFHLSSILTVFFCGIVM) traverse the membrane as a helical segment. Residues 287-305 (SHYTWHNVTDKSKVTTKHT) are Vacuolar-facing. Residue asparagine 293 is glycosylated (N-linked (GlcNAc...) asparagine). A helical transmembrane segment spans residues 306–326 (FAAMSFLAEIFIFLYVGMDAL). Over 327-345 (DIEKWDVVRNSPGQSIGVS) the chain is Cytoplasmic. Residues 346–366 (SILLGLILLGRAAFVFPLSFL) traverse the membrane as a helical segment. Over 367–383 (SNLTKSSPDEKIDLKKQ) the chain is Vacuolar. Residue asparagine 368 is glycosylated (N-linked (GlcNAc...) asparagine). Residues 384 to 406 (VTIWWAGLMRGAVSMALAYNQFT) traverse the membrane as a helical segment. Topologically, residues 407-416 (TSGHTKVLGN) are cytoplasmic. A helical membrane pass occupies residues 417–437 (AIMITSTITVVLFSTVVFGLL). Residues 438-503 (TKPLVKHLQP…FWKSPSRFTH (66 aa)) lie on the Vacuolar side of the membrane.

Belongs to the monovalent cation:proton antiporter 1 (CPA1) transporter (TC 2.A.36) family. In terms of tissue distribution, expressed in roots.

The protein localises to the vacuole membrane. The catalysed reaction is Na(+)(in) + H(+)(out) = Na(+)(out) + H(+)(in). It carries out the reaction K(+)(in) + H(+)(out) = K(+)(out) + H(+)(in). May act in low affinity electroneutral exchange of protons for cations such as Na(+) or K(+) across membranes. May also exchange Li(+) and Cs(+) with a lower affinity. This Arabidopsis thaliana (Mouse-ear cress) protein is Sodium/hydrogen exchanger 3 (NHX3).